A 58-amino-acid polypeptide reads, in one-letter code: MAKIKIKQTGSPIRRPESQKKILVGLGLNKMHKVVELEDTPEVRGAIAKIPHLVEVVD.

It belongs to the universal ribosomal protein uL30 family. As to quaternary structure, part of the 50S ribosomal subunit.

This chain is Large ribosomal subunit protein uL30, found in Erythrobacter litoralis (strain HTCC2594).